Consider the following 478-residue polypeptide: Glycogen synthase (478 aa).

K15 lines the ADP-alpha-D-glucose pocket.

The protein belongs to the glycosyltransferase 1 family. Bacterial/plant glycogen synthase subfamily.

The enzyme catalyses [(1-&gt;4)-alpha-D-glucosyl](n) + ADP-alpha-D-glucose = [(1-&gt;4)-alpha-D-glucosyl](n+1) + ADP + H(+). Its pathway is glycan biosynthesis; glycogen biosynthesis. Its function is as follows. Synthesizes alpha-1,4-glucan chains using ADP-glucose. This Acholeplasma laidlawii (strain PG-8A) protein is Glycogen synthase.